The following is a 325-amino-acid chain: Probable pectate lyase B (325 aa).

The first 15 residues, 1-15 (MRLPTLFMLAAIATA), serve as a signal peptide directing secretion. 3 residues coordinate Ca(2+): aspartate 132, aspartate 161, and aspartate 165. Arginine 218 is an active-site residue.

The protein belongs to the polysaccharide lyase 1 family. It depends on Ca(2+) as a cofactor.

Its subcellular location is the secreted. The catalysed reaction is Eliminative cleavage of (1-&gt;4)-alpha-D-galacturonan to give oligosaccharides with 4-deoxy-alpha-D-galact-4-enuronosyl groups at their non-reducing ends.. In terms of biological role, pectinolytic enzyme consist of four classes of enzymes: pectin lyase, polygalacturonase, pectin methylesterase and rhamnogalacturonase. Among pectinolytic enzymes, pectin lyase is the most important in depolymerization of pectin, since it cleaves internal glycosidic bonds of highly methylated pectins. Favors pectate, the anion, over pectin, the methyl ester. The chain is Probable pectate lyase B (plyB) from Aspergillus terreus (strain NIH 2624 / FGSC A1156).